The primary structure comprises 1209 residues: MATTSHMFMYSLTIQPPTAITQAILGQFAGTKEQQIVTASGSKLTIHRPDPTQGKVIPLYTQDVFGIIRTLAAFRLAGSNKDYIIIGSDSGRITIIEYVPSQNRFNRIHLETFGKSGVRRVVPGQYLAVDPKGRACLIASVEKNKLVYVLNRNSQAELTISSPLEAHKPQTLVYSVVALDAGYENPVFAALEVDYSESDQDPTGRAYEEVEKLLVYYELDLGLNHVVRKWTDPVDRTSSMLFQVPGGADGPSGVLVCAEDNITYRHSNQDAFRVPIPRRKGAMENPERKRCITAGVMHKMRGAFFFLLQTEDGDLFKLTLDMVEDDKGQLTGEVKGLKIKYFDTVPLASSLLILKSGFLYVAAEGGNHHFYQFEKLGDDDEETEFNSDDFSADPAAPCTPVYFQPRGAENLNLVEAINSLNPLVDSKVVNISEDDAPQIFTVSGTGARSTFRTLKHGLEVSEIVESELPSVPSAVWTTKLTRADEFDAYIVLSFANGTLVLSIGETVEEVTDTGFLSSAPTLAVQQLGEDSLIQIHPRGIRHILADRRVNEWPAPQHRSIVAAATNERQVAVALSSGEIVYFELDADGSLAEYDERRQMSGTVTCLSLGEVPEGRVRSSFLAVGCDDSTVRILSLDPDTTLENKSVQALTAAPSALNIIAMADSSSGGTTLYLHIGLHSGVYLRTALDEVTGELSDTRTRFLGSKAVKLFQVSVTGQTAVLALSSRPWLGYSDTQTKGFMLTPLDYVGLEWGWNFSSEQCVEGMVGIQGQNLRIFSIEKLDNNMLQQSIPLAYTPRHFIKHPEEPLFYVIEADNNVLSPATRARLLEDSKARGGDTTVLPPEDFGYPRGTGHWASCIQIIDPLDAKAVVGAVELEENEAAVSIAAVPFTSQDDETFLVVGTAKDMTVNPPSSAGGYIHIYRFQEDGKELEFIHKTKVEEPPLALLGFQGRLLAGVGSVLRIYDLGMKQLLRKCQAAVAPKAIVGLQTQGSRIVVSDVRESVTYVVYKYQDNVLIPFVDDSIARWTTAATMVDYETTAGGDKFGNLWLVRCPKKASEEADEEGSGAHLIHDRGYLQGTPNRLELMIHVFTQDIPTSLHKTQLVAGGRDILVWTGFQGTIGILVPFVSREDVDFFQSLEMQLASQCPPLAGRDHLIYRSYYAPVKGVIDGDLCEQYFLLSNDTKMMIAAELDRSVREIERKISDMRTRVAY.

The protein belongs to the RSE1 family. As to quaternary structure, associated with the spliceosome.

It localises to the nucleus. In terms of biological role, involved in pre-mRNA splicing and cell cycle control. This Emericella nidulans (strain FGSC A4 / ATCC 38163 / CBS 112.46 / NRRL 194 / M139) (Aspergillus nidulans) protein is Pre-mRNA-splicing factor rse1 (rse1).